We begin with the raw amino-acid sequence, 398 residues long: 1-deoxy-D-xylulose 5-phosphate reductoisomerase (398 aa).

Positions 13, 14, 15, 16, 40, and 127 each coordinate NADPH. A 1-deoxy-D-xylulose 5-phosphate-binding site is contributed by Lys128. Glu129 serves as a coordination point for NADPH. Asp153 provides a ligand contact to Mn(2+). 1-deoxy-D-xylulose 5-phosphate is bound by residues Ser154, Glu155, Ser188, and His211. Residue Glu155 coordinates Mn(2+). Position 217 (Gly217) interacts with NADPH. 4 residues coordinate 1-deoxy-D-xylulose 5-phosphate: Ser224, Asn229, Lys230, and Glu233. Glu233 provides a ligand contact to Mn(2+).

The protein belongs to the DXR family. Requires Mg(2+) as cofactor. The cofactor is Mn(2+).

It carries out the reaction 2-C-methyl-D-erythritol 4-phosphate + NADP(+) = 1-deoxy-D-xylulose 5-phosphate + NADPH + H(+). The protein operates within isoprenoid biosynthesis; isopentenyl diphosphate biosynthesis via DXP pathway; isopentenyl diphosphate from 1-deoxy-D-xylulose 5-phosphate: step 1/6. In terms of biological role, catalyzes the NADPH-dependent rearrangement and reduction of 1-deoxy-D-xylulose-5-phosphate (DXP) to 2-C-methyl-D-erythritol 4-phosphate (MEP). This chain is 1-deoxy-D-xylulose 5-phosphate reductoisomerase, found in Cellvibrio japonicus (strain Ueda107) (Pseudomonas fluorescens subsp. cellulosa).